An 84-amino-acid chain; its full sequence is Large ribosomal subunit protein bL27 (84 aa).

The interval 1–21 is disordered; it reads MAHKKGVGSSRNGRDSDGQRL.

This sequence belongs to the bacterial ribosomal protein bL27 family.

The sequence is that of Large ribosomal subunit protein bL27 from Trichlorobacter lovleyi (strain ATCC BAA-1151 / DSM 17278 / SZ) (Geobacter lovleyi).